The primary structure comprises 282 residues: Protein MGF 505-3R (282 aa).

Belongs to the asfivirus MGF 505 family.

Its function is as follows. Plays a role in virus cell tropism, and may be required for efficient virus replication in macrophages. The chain is Protein MGF 505-3R from Ornithodoros (relapsing fever ticks).